Reading from the N-terminus, the 172-residue chain is CD-NTase-associated protein 7 (172 aa).

Positions A141–V172 are required for binding to CdnC and to confer phage immunity.

The protein belongs to the bacterial HORMA family. HORMA1 subfamily. Forms complexes with CdnC with 1:1 and 2:2 stoichimetry, and a 1:1:6 CdnC:Cap7:Cap6 complex.

Sensor protein of a CBASS antivirus system. CBASS (cyclic oligonucleotide-based antiphage signaling system) provides immunity against bacteriophage. The CD-NTase protein synthesizes cyclic nucleotides in response to infection; these serve as specific second messenger signals. The signals activate a diverse range of effectors, leading to bacterial cell death and thus abortive phage infection. A type III-C(AAA) CBASS system. Functionally, binds to a closure peptide (consensus His-Xaa-Xaa-Ile-Leu-Leu-Thr), which allows it to activate CdnC for second messenger synthesis. In terms of biological role, protects E.coli strain JP313 against bacteriophage lambda cI- infection. When the cdnC-cap7-cap6-nucC operon is transformed into a susceptible strain it confers bacteriophage immunity. Mutations in the sensor (Cap7 also called HORMA) or effector proteins (CdnC, NucC) but not the disassembly protein (Cap6 also called Trip13) no longer confer immunity. The presence of the intact operon leads to culture collapse and cell death, which occurs before the phage has finished its replication cycle, thus protecting non-infected bacteria by aborting the phage infection and preventing its propagation. The polypeptide is CD-NTase-associated protein 7 (Escherichia coli (strain MS 115-1)).